The chain runs to 66 residues: uncharacterized protein (66 aa).

Residues 32–49 (WAFSLLIAGSAFLWIYMR) form a helical membrane-spanning segment.

It is found in the membrane. This is an uncharacterized protein from Bacillus subtilis (strain 168).